We begin with the raw amino-acid sequence, 474 residues long: Iroquois-class homeodomain protein IRX-2 (474 aa).

The homeobox; TALE-type DNA-binding region spans 115 to 177 (DPAYRKNATR…NARRRLKKEN (63 aa)). 3 disordered regions span residues 177–220 (NKMT…EDEG), 262–373 (EDLE…PGGS), and 420–461 (PGET…DTSE). Ser-187 is modified (phosphoserine). Basic and acidic residues predominate over residues 196 to 210 (DASRSKEESSDKAQD). Over residues 262–275 (EDLEDEEDEEDECE) the composition is skewed to acidic residues. Composition is skewed to low complexity over residues 293–305 (EAPL…EAAP) and 358–373 (PAAA…PGGS).

The protein belongs to the TALE/IRO homeobox family. As to expression, expressed in specific and overlapping patterns with Irx1 and Irx3 in the developing and adult metanephric kidney. In the adult metanephros, renal expression is found in the loop of Henle in the S3 proximal tubule segment and in the thick ascending limb (TAL) of the distal tubule.

The protein resides in the nucleus. This is Iroquois-class homeodomain protein IRX-2 (Irx2) from Mus musculus (Mouse).